A 263-amino-acid chain; its full sequence is Acyl-[acyl-carrier-protein]--UDP-N-acetylglucosamine O-acyltransferase (263 aa).

The protein belongs to the transferase hexapeptide repeat family. LpxA subfamily. As to quaternary structure, homotrimer.

It is found in the cytoplasm. It catalyses the reaction a (3R)-hydroxyacyl-[ACP] + UDP-N-acetyl-alpha-D-glucosamine = a UDP-3-O-[(3R)-3-hydroxyacyl]-N-acetyl-alpha-D-glucosamine + holo-[ACP]. The protein operates within glycolipid biosynthesis; lipid IV(A) biosynthesis; lipid IV(A) from (3R)-3-hydroxytetradecanoyl-[acyl-carrier-protein] and UDP-N-acetyl-alpha-D-glucosamine: step 1/6. Functionally, involved in the biosynthesis of lipid A, a phosphorylated glycolipid that anchors the lipopolysaccharide to the outer membrane of the cell. The chain is Acyl-[acyl-carrier-protein]--UDP-N-acetylglucosamine O-acyltransferase from Xanthomonas euvesicatoria pv. vesicatoria (strain 85-10) (Xanthomonas campestris pv. vesicatoria).